A 469-amino-acid polypeptide reads, in one-letter code: UDP-N-acetylmuramoylalanine--D-glutamate ligase (469 aa).

121 to 127 (GTNGKST) serves as a coordination point for ATP.

This sequence belongs to the MurCDEF family.

It localises to the cytoplasm. The catalysed reaction is UDP-N-acetyl-alpha-D-muramoyl-L-alanine + D-glutamate + ATP = UDP-N-acetyl-alpha-D-muramoyl-L-alanyl-D-glutamate + ADP + phosphate + H(+). It functions in the pathway cell wall biogenesis; peptidoglycan biosynthesis. Cell wall formation. Catalyzes the addition of glutamate to the nucleotide precursor UDP-N-acetylmuramoyl-L-alanine (UMA). The protein is UDP-N-acetylmuramoylalanine--D-glutamate ligase of Agrobacterium fabrum (strain C58 / ATCC 33970) (Agrobacterium tumefaciens (strain C58)).